Reading from the N-terminus, the 272-residue chain is uncharacterized protein (272 aa).

Belongs to the chlamydial CPn_0389/CT_041/TC_0311 family.

This is an uncharacterized protein from Chlamydia pneumoniae (Chlamydophila pneumoniae).